The chain runs to 333 residues: Torsin-1A (333 aa).

The N-terminal stretch at Met1–Ala20 is a signal peptide. The interaction with SNAPIN stretch occupies residues Lys92 to Gly252. N-linked (GlcNAc...) asparagine glycosylation is found at Asn144 and Asn159. Residues Gly252 to Asp333 are interaction with KLC1. Positions Lys313–Asp333 are interaction with SYNE3.

Belongs to the ClpA/ClpB family. Torsin subfamily. As to quaternary structure, homohexamer. Interacts with TOR1B; the interaction may be specific of neural tissues. Interacts (ATP-bound) with TOR1AIP1 and TOR1AIP2; the interactions induce ATPase activity. Interacts with KLHL14; preferentially when ATP-free. Interacts with KLC1 (via TPR repeats); the interaction associates TOR1A with the kinesin oligomeric complex. Interacts with COPS4; the interaction associates TOR1A with the CSN complex. Interacts with SNAPIN; the interaction is direct and associates SNAPIN with the CSN complex. Interacts with STON2. Interacts (ATP-bound) with SYNE3 (via KASH domain); the interaction is required for SYNE3 nuclear envelope localization. Interacts with VIM; the interaction associates TOR1A with the cytoskeleton. Interacts with PLEC. Interacts (ATP-bound) with SLC6A3; regulates SLC6A3 transport to the plasma membrane. N-glycosylated. As to expression, expressed in brain (at protein level).

The protein resides in the endoplasmic reticulum lumen. It is found in the nucleus inner membrane. It localises to the cell projection. Its subcellular location is the growth cone. The protein localises to the cytoplasmic vesicle membrane. The protein resides in the cytoplasmic vesicle. It is found in the secretory vesicle. It localises to the synaptic vesicle. The catalysed reaction is ATP + H2O = ADP + phosphate + H(+). Its function is as follows. Protein with chaperone functions important for the control of protein folding, processing, stability and localization as well as for the reduction of misfolded protein aggregates. Involved in the regulation of synaptic vesicle recycling, controls STON2 protein stability in collaboration with the COP9 signalosome complex (CSN). In the nucleus, may link the cytoskeleton with the nuclear envelope, this mechanism seems to be crucial for the control of nuclear polarity, cell movement and, specifically in neurons, nuclear envelope integrity. Participates in the cellular trafficking and may regulate the subcellular location of multipass membrane proteins such as the dopamine transporter SLC6A3, leading to the modulation of dopamine neurotransmission. In the endoplasmic reticulum, plays a role in the quality control of protein folding by increasing clearance of misfolded proteins such as SGCE variants or holding them in an intermediate state for proper refolding. May have a redundant function with TOR1B in non-neural tissues. This Rattus norvegicus (Rat) protein is Torsin-1A (Tor1a).